The primary structure comprises 95 residues: Large ribosomal subunit protein bL21 (95 aa).

This sequence belongs to the bacterial ribosomal protein bL21 family. In terms of assembly, part of the 50S ribosomal subunit. Contacts protein L20.

In terms of biological role, this protein binds to 23S rRNA in the presence of protein L20. The chain is Large ribosomal subunit protein bL21 from Rubrobacter xylanophilus (strain DSM 9941 / JCM 11954 / NBRC 16129 / PRD-1).